The following is a 205-amino-acid chain: Protein MIS12 homolog (205 aa).

The stretch at 108 to 205 (PYSEEDFQHL…EKESKRLKIS (98 aa)) forms a coiled coil.

The protein belongs to the mis12 family. Component of the MIS12 complex composed of MIS12, DSN1, NSL1 and PMF1. Also interacts with KNL1, CBX3, CBX5, NDC80 and ZWINT.

Its subcellular location is the chromosome. The protein localises to the centromere. It localises to the kinetochore. In terms of biological role, part of the MIS12 complex which is required for normal chromosome alignment and segregation and for kinetochore formation during mitosis. Essential for proper kinetochore microtubule attachments. The chain is Protein MIS12 homolog from Homo sapiens (Human).